The following is a 122-amino-acid chain: UPF0145 protein Bmul_3577/BMULJ_04940 (122 aa).

Belongs to the UPF0145 family.

The protein is UPF0145 protein Bmul_3577/BMULJ_04940 of Burkholderia multivorans (strain ATCC 17616 / 249).